The following is a 593-amino-acid chain: Probable translation initiation factor IF-2 (593 aa).

One can recognise a tr-type G domain in the interval 7-221 (IRTPIVCVMG…VLIGLAQRYM (215 aa)). The segment at 16–23 (GHVDHGKT) is G1. GTP is bound at residue 16-23 (GHVDHGKT). Positions 41–45 (EITQH) are G2. The G3 stretch occupies residues 77-80 (DTPG). Residues 77–81 (DTPGH) and 131–134 (NKVD) each bind GTP. A G4 region spans residues 131-134 (NKVD). Residues 199 to 201 (SAL) are G5.

The protein belongs to the TRAFAC class translation factor GTPase superfamily. Classic translation factor GTPase family. IF-2 subfamily.

Functionally, function in general translation initiation by promoting the binding of the formylmethionine-tRNA to ribosomes. Seems to function along with eIF-2. The sequence is that of Probable translation initiation factor IF-2 from Methanoculleus marisnigri (strain ATCC 35101 / DSM 1498 / JR1).